Consider the following 112-residue polypeptide: UPF0060 membrane protein Arth_4238 (112 aa).

4 consecutive transmembrane segments (helical) span residues 7–27 (ILLF…VWQA), 33–53 (EWWW…AATL), 62–82 (ILAA…MVFD), and 88–108 (RWDI…MFAP).

It belongs to the UPF0060 family.

The protein resides in the cell membrane. The sequence is that of UPF0060 membrane protein Arth_4238 from Arthrobacter sp. (strain FB24).